A 436-amino-acid chain; its full sequence is Small ribosomal subunit protein uS5m (436 aa).

The S5 DRBM domain maps to 152 to 218 (FETYCLEVKR…GMASRKLFHV (67 aa)). The tract at residues 417-436 (GVEPMPLGIGLSHVVPKKDD) is disordered.

The protein belongs to the universal ribosomal protein uS5 family. Component of the mitochondrial ribosome small subunit (28S) which comprises a 12S rRNA and about 30 distinct proteins.

It localises to the mitochondrion. The protein is Small ribosomal subunit protein uS5m (mrps-5) of Caenorhabditis elegans.